The primary structure comprises 597 residues: uncharacterized protein (597 aa).

The PWWP domain occupies 16–78 (VGRLVWVRRR…LENSKTVKAF (63 aa)). Disordered regions lie at residues 126–210 (NLCN…MRGL) and 449–482 (QLKGKRNSRQMSKKQEERRNVYGEEANNNSSTPH). Positions 134-143 (EDSKRCLSGK) are enriched in basic and acidic residues. The span at 144 to 161 (EDEDSGSSDAEETEDDEL) shows a compositional bias: acidic residues. A compositionally biased stretch (polar residues) spans 166 to 185 (EQLQSSISSQEMNNVGASKV). Over residues 450–460 (LKGKRNSRQMS) the composition is skewed to basic residues. Residues 461 to 470 (KKQEERRNVY) show a composition bias toward basic and acidic residues.

This is an uncharacterized protein from Arabidopsis thaliana (Mouse-ear cress).